A 358-amino-acid chain; its full sequence is Photosystem II protein D1 2 (358 aa).

3 helical membrane-spanning segments follow: residues 28–45, 117–132, and 141–155; these read YVGW…AATI, HFLI…QWEL, and WICV…AAMA. Chlorophyll a is bound at residue H117. Residue Y125 participates in pheophytin a binding. [CaMn4O5] cluster is bound by residues D169 and E188. The chain crosses the membrane as a helical span at residues 196–217; sequence FHMLGVAGVFGGSLFSAMHGSL. Residue H197 participates in chlorophyll a binding. Residues H214 and 263–264 contribute to the a quinone site; that span reads SF. H214 contributes to the Fe cation binding site. Position 271 (H271) interacts with Fe cation. The helical transmembrane segment at 273 to 287 threads the bilayer; sequence FLGAWPVVGIWFTSM. [CaMn4O5] cluster contacts are provided by H331, E332, D341, and A343. Positions 344–358 are excised as a propeptide; that stretch reads TVESTPVALQAPAIG.

It belongs to the reaction center PufL/M/PsbA/D family. In terms of assembly, PSII is composed of 1 copy each of membrane proteins PsbA, PsbB, PsbC, PsbD, PsbE, PsbF, PsbH, PsbI, PsbJ, PsbK, PsbL, PsbM, PsbT, PsbX, PsbY, PsbZ, Psb30/Ycf12, peripheral proteins PsbO, CyanoQ (PsbQ), PsbU, PsbV and a large number of cofactors. It forms dimeric complexes. The D1/D2 heterodimer binds P680, chlorophylls that are the primary electron donor of PSII, and subsequent electron acceptors. It shares a non-heme iron and each subunit binds pheophytin, quinone, additional chlorophylls, carotenoids and lipids. D1 provides most of the ligands for the Mn4-Ca-O5 cluster of the oxygen-evolving complex (OEC). There is also a Cl(-1) ion associated with D1 and D2, which is required for oxygen evolution. The PSII complex binds additional chlorophylls, carotenoids and specific lipids. serves as cofactor. Post-translationally, tyr-160 forms a radical intermediate that is referred to as redox-active TyrZ, YZ or Y-Z. C-terminally processed by CtpA; processing is essential to allow assembly of the oxygen-evolving complex and thus photosynthetic growth.

The protein localises to the cellular thylakoid membrane. It carries out the reaction 2 a plastoquinone + 4 hnu + 2 H2O = 2 a plastoquinol + O2. In terms of biological role, photosystem II (PSII) is a light-driven water:plastoquinone oxidoreductase that uses light energy to abstract electrons from H(2)O, generating O(2) and a proton gradient subsequently used for ATP formation. It consists of a core antenna complex that captures photons, and an electron transfer chain that converts photonic excitation into a charge separation. The D1/D2 (PsbA/PsbD) reaction center heterodimer binds P680, the primary electron donor of PSII as well as several subsequent electron acceptors. The protein is Photosystem II protein D1 2 of Parasynechococcus marenigrum (strain WH8102).